Here is a 437-residue protein sequence, read N- to C-terminus: MNTVPEPSAELLARAGAVRLAAVELGQTNNGQRSRALHAMADALQERSSLIVAANVQDLERSEAEGLASALMARLKLDATKLQAAIDGVRKVASLPDPLGLRQLHRELDTDLVLERITVPLGVVGVIFEARPDAVVQIASLAIRSGNGALLKGGSEARCTNEAVMDALRAGLAREESDVSPDALALLTTREESLGLLRLDGLVDLIIPRGSNELVRFIQDNTRIPVLGHADGVCHLYVDAAADVMKATRVAVDSKTQYPAACNAIETLLVHRSIATAFLAAAVPAFQAAGVTLRGDAESQSLGVNESAQEEDWSTEYLDLTLSVRVVDDLACATEHIRRYGSRHTEVILTEDLATADRFLAAVDSAGVYHNCSSRFADGFRYGFGAEVGISTQTLPPRGPVGLEGLVTYRYRLRGNGHIAADYAAGRRSFTHQDLPL.

Belongs to the gamma-glutamyl phosphate reductase family.

It is found in the cytoplasm. The enzyme catalyses L-glutamate 5-semialdehyde + phosphate + NADP(+) = L-glutamyl 5-phosphate + NADPH + H(+). The protein operates within amino-acid biosynthesis; L-proline biosynthesis; L-glutamate 5-semialdehyde from L-glutamate: step 2/2. In terms of biological role, catalyzes the NADPH-dependent reduction of L-glutamate 5-phosphate into L-glutamate 5-semialdehyde and phosphate. The product spontaneously undergoes cyclization to form 1-pyrroline-5-carboxylate. This chain is Gamma-glutamyl phosphate reductase, found in Synechococcus sp. (strain CC9902).